We begin with the raw amino-acid sequence, 291 residues long: MKKVIAITGPTASGKTSLSIKIAKKFNLEIINCDSLQMYQKYDIGTAKITLEEAQGIKHHLLDFLAPGTNYSIYHFQKDARKKIEETPLPLFVGGSGLYLKSALFDYELTPKSLFLPPTSLPAIENMIDFIKQKDPQLIANLDLKNPRRILSAYQDLLEGTLRSQKNKKHNSLYSSLIFYLDIDRQILKKRVILRLEQMLKQGFIEEVNQIQTHFPNPNFNIIGYREIKALLEGKITLDQAKTLIIQKTMQYAKRQKTWFKNQIKPIILDALSPDLEKTTICLINDFLKTD.

9 to 16 (GPTASGKT) contributes to the ATP binding site. A substrate-binding site is contributed by 11 to 16 (TASGKT). An interaction with substrate tRNA region spans residues 34 to 37 (DSLQ).

The protein belongs to the IPP transferase family. Monomer. Requires Mg(2+) as cofactor.

It carries out the reaction adenosine(37) in tRNA + dimethylallyl diphosphate = N(6)-dimethylallyladenosine(37) in tRNA + diphosphate. In terms of biological role, catalyzes the transfer of a dimethylallyl group onto the adenine at position 37 in tRNAs that read codons beginning with uridine, leading to the formation of N6-(dimethylallyl)adenosine (i(6)A). The protein is tRNA dimethylallyltransferase of Onion yellows phytoplasma (strain OY-M).